Here is an 872-residue protein sequence, read N- to C-terminus: Metabotropic glutamate receptor 2 (872 aa).

The N-terminal stretch at Met1 to Ala18 is a signal peptide. Residues Glu19 to Trp567 lie on the Extracellular side of the membrane. Cys50 and Cys92 are disulfide-bonded. Residues Arg57, Arg61, Ser145, Ala166, and Thr168 each coordinate L-glutamate. Residues Asn203 and Asn286 are each glycosylated (N-linked (GlcNAc...) asparagine). 7 disulfide bridges follow: Cys234–Cys518, Cys355–Cys362, Cys400–Cys407, Cys500–Cys519, Cys504–Cys522, Cys525–Cys537, and Cys540–Cys553. L-glutamate is bound at residue Asp295. Residue Asn338 is glycosylated (N-linked (GlcNAc...) asparagine). Position 377 (Lys377) interacts with L-glutamate. Asn402 carries an N-linked (GlcNAc...) asparagine glycan. N-linked (GlcNAc...) asparagine glycosylation occurs at Asn547. A helical transmembrane segment spans residues Ala568–Val590. Over Arg591–Glu604 the chain is Cytoplasmic. The helical transmembrane segment at Leu605–Ala625 threads the bilayer. At Lys626–Arg636 the chain is on the extracellular side. Cys632 and Cys721 form a disulfide bridge. Residues Leu637–Asn655 form a helical membrane-spanning segment. Residues Arg656–Gln679 lie on the Cytoplasmic side of the membrane. The interval Ala677–Ala685 is important for interaction with HTR2A. A helical transmembrane segment spans residues Val680–Val700. Residues Glu701–Asp725 lie on the Extracellular side of the membrane. A helical transmembrane segment spans residues Ala726–Phe747. The Cytoplasmic portion of the chain corresponds to Lys748–Lys760. A helical membrane pass occupies residues Phe761–Thr783. The Extracellular portion of the chain corresponds to Ser784–Thr793. A helical transmembrane segment spans residues Met794 to Phe819. Residues Gln820–Leu872 lie on the Cytoplasmic side of the membrane.

It belongs to the G-protein coupled receptor 3 family. Forms heterodimers with GRM3 or GRM4. Interacts with TAMALIN. Interacts with HTR2A. In terms of assembly, (Microbial infection) Interacts with H5N6 virus protein HA. As to quaternary structure, (Microbial infection) Interacts with rabies virus protein G. (Microbial infection) Interacts with SARS-CoV-2 virus spike protein S. As to expression, detected in brain cortex (at protein level). Widely expressed in different regions of the adult brain as well as in fetal brain.

The protein localises to the cell membrane. It is found in the synapse. Its subcellular location is the cell projection. The protein resides in the dendrite. Functionally, dimeric G protein-coupled receptor which is activated by the excitatory neurotransmitter L-glutamate. Plays critical roles in modulating synaptic transmission and neuronal excitability. Upon activation by glutamate, inhibits presynaptic calcium channels, reducing further glutamate release and dampening excitatory signaling. Mechanistically, ligand binding causes a conformation change that triggers signaling via guanine nucleotide-binding proteins (G proteins) and modulates the activity of down-stream effectors, such as adenylate cyclase. May mediate suppression of neurotransmission or may be involved in synaptogenesis or synaptic stabilization. In terms of biological role, (Microbial infection) Plays an important role in influenza virus internalization. Its function is as follows. (Microbial infection) Acts as a host entry factor for rabies virus that hijacks the endocytosis of GRM2 to enter cells. (Microbial infection) Acts as a host entry factor for SARS-CoV-2 that hijacks the endocytosis of GRM2 to enter cells. The chain is Metabotropic glutamate receptor 2 from Homo sapiens (Human).